We begin with the raw amino-acid sequence, 155 residues long: Myelin basic protein (155 aa).

The tract at residues 1-72 (MASATTSDHA…HQGARRQTDD (72 aa)) is disordered. The residue at position 2 (Ala2) is an N-acetylalanine; in forms C1, C2, C3 and C8. The residue at position 12 (Gln12) is a Deamidated glutamine; in forms C1, C2 and C3. Positions 37–49 (GSRKVPEKGKEPA) are enriched in basic and acidic residues. Residues Ser73 and Ser84 each carry the phosphoserine; in forms C1, C2 and C3 modification. The disordered stretch occupies residues 113–155 (RAHYGAAGSSKSKDGFRGRRDGSGTLSSFFKMGKKGEGSPARR). Phosphoserine; in forms C1 and C3 occurs at positions 121 and 122. Over residues 123 to 134 (KSKDGFRGRRDG) the composition is skewed to basic and acidic residues. Phosphoserine; in forms C1, C2 and C3 is present on residues Ser135, Ser139, and Ser140.

This sequence belongs to the myelin basic protein family. Post-translationally, several charge isomers are produced as a result of optional post-translational modifications, such as phosphorylation, deamidation and citrullination. Dogfish MBP contains four major components designated as C1, C2, C3 and C8. C1 and C3, but not C2 are phosphorylated at either Ser-121 or Ser-122; C2 is phosphorylated at 2 or 3 sites among Ser-135, Ser-139 and Ser-140. Hydroxyproline and citrulline are present but were not identified in either C1, C2 or C3, which suggests their presence in C8.

The protein resides in the myelin membrane. Its function is as follows. This protein may function to maintain proper structure of myelin. This chain is Myelin basic protein (MBP), found in Squalus acanthias (Spiny dogfish).